A 251-amino-acid chain; its full sequence is Duodenase-1 (251 aa).

Residues Met-1–Ala-17 form the signal peptide. The propeptide occupies Gly-18–Lys-19. The 223-residue stretch at Ile-20 to Met-242 folds into the Peptidase S1 domain. Cysteines 48 and 64 form a disulfide. His-63 (charge relay system) is an active-site residue. N-linked (GlcNAc...) asparagine glycosylation occurs at Asn-70. The Charge relay system role is filled by Asp-107. 2 cysteine pairs are disulfide-bonded: Cys-141–Cys-207 and Cys-172–Cys-186. Ser-201 serves as the catalytic Charge relay system.

This sequence belongs to the peptidase S1 family. In terms of assembly, monomer.

Its function is as follows. Protease which has both trypsin-like and chymotrypsin-like activities. Shows a preferential cleavage after Lys, Arg, Tyr, Phe, and Leu residues. This is Duodenase-1 (BDMD1) from Bos taurus (Bovine).